The sequence spans 161 residues: MTKGPIRLDVAVSYALPRAGLPSAVSFRKWVAAALKGRIREADLAVRLVDEKEGCSLNHHYRGKDYATNVLSFPAELPEGLPKGIKMPLLGDLVICAPVVAREAAEQGKSLAAHYAHLTVHGTLHLLGWDHDDDKEADAMEQLEREILADLGIDDPYAGEQ.

3 residues coordinate Zn(2+): His-121, His-125, and His-131.

Belongs to the endoribonuclease YbeY family. Zn(2+) serves as cofactor.

The protein resides in the cytoplasm. Functionally, single strand-specific metallo-endoribonuclease involved in late-stage 70S ribosome quality control and in maturation of the 3' terminus of the 16S rRNA. The protein is Endoribonuclease YbeY of Xanthomonas oryzae pv. oryzae (strain MAFF 311018).